The sequence spans 671 residues: Beta-galactosidase 1 (671 aa).

The first 18 residues, 1–18 (MKLIVLIFFLLFINLNYC), serve as a signal peptide directing secretion. E200 acts as the Proton donor in catalysis. N228 carries an N-linked (GlcNAc...) asparagine glycan. E288 functions as the Nucleophile in the catalytic mechanism. N321, N391, N400, N499, N509, N564, and N595 each carry an N-linked (GlcNAc...) asparagine glycan.

Belongs to the glycosyl hydrolase 35 family.

It localises to the lysosome. The catalysed reaction is Hydrolysis of terminal non-reducing beta-D-galactose residues in beta-D-galactosides.. Cleaves beta-linked terminal galactosyl residues from gangliosides, glycoproteins, and glycosaminoglycans. The protein is Beta-galactosidase 1 (glb1) of Dictyostelium discoideum (Social amoeba).